A 489-amino-acid polypeptide reads, in one-letter code: Palmitoyltransferase ZDHHC14 (489 aa).

Topologically, residues 1 to 60 (MPPGGGGPMKDCEYSQISTHSSSPMESPHKKKKIAARRKWEVFPGRNKFFCNGRIMMARQ) are cytoplasmic. A helical transmembrane segment spans residues 61–81 (TGVFYLTLILILVTSGLFFAF). Residues 82-89 (DCRYLAEK) are Lumenal-facing. A helical transmembrane segment spans residues 90–110 (ITPAIPVVGGILFFFVMGTLL). The Cytoplasmic portion of the chain corresponds to 111-208 (RTSFSDPGVL…GNCVGKRNYR (98 aa)). A DHHC domain is found at 165-215 (KYCFTCKIFRPPRASHCSLCDNCVEQFDHHCPWVGNCVGKRNYRFFYMFIL). Cys-195 serves as the catalytic S-palmitoyl cysteine intermediate. The helical transmembrane segment at 209–229 (FFYMFILSLSFLTVFIFAFVI) threads the bilayer. Residues 230 to 255 (THVIHRSQQKGFLDALKDSPASVLEA) lie on the Lumenal side of the membrane. A helical membrane pass occupies residues 256 to 276 (VICFFSVWSIIGLSGFHTYLI). Residues 277–489 (SSNQTTNEDI…VRGLVKLSSV (213 aa)) are Cytoplasmic-facing. Residues 434-454 (HGGHQFLTPDEAPSPPRMLGA) form a disordered region. Ser-456 is subject to Phosphoserine.

The protein belongs to the DHHC palmitoyltransferase family. ERF2/ZDHHC9 subfamily.

The protein resides in the endoplasmic reticulum membrane. It is found in the golgi apparatus membrane. It catalyses the reaction L-cysteinyl-[protein] + hexadecanoyl-CoA = S-hexadecanoyl-L-cysteinyl-[protein] + CoA. Its function is as follows. Palmitoyltransferase that could catalyze the addition of palmitate onto various protein substrates. May have a palmitoyltransferase activity toward the beta-2 adrenergic receptor/ADRB2 and thereby regulate G protein-coupled receptor signaling. May play a role in cell differentiation and apoptosis. This is Palmitoyltransferase ZDHHC14 from Mus musculus (Mouse).